Consider the following 142-residue polypeptide: Hemoglobin subunit alpha (142 aa).

The Globin domain maps to 2-142; that stretch reads VLSAADKGHV…VSTVLTSKYR (141 aa). Serine 4 carries the phosphoserine modification. N6-succinyllysine is present on residues lysine 8 and lysine 12. Lysine 17 carries the N6-acetyllysine; alternate modification. The residue at position 17 (lysine 17) is an N6-succinyllysine; alternate. Tyrosine 25 bears the Phosphotyrosine mark. Position 36 is a phosphoserine (serine 36). Lysine 41 carries the N6-succinyllysine modification. Residue serine 50 is modified to Phosphoserine. Histidine 59 lines the O2 pocket. Heme b is bound at residue histidine 88. Serine 103 carries the phosphoserine modification. Threonine 109 carries the phosphothreonine modification. Phosphoserine is present on serine 125. Threonine 135 and threonine 138 each carry phosphothreonine. At serine 139 the chain carries Phosphoserine.

It belongs to the globin family. Heterotetramer of two alpha chains and two beta chains. As to expression, red blood cells.

Functionally, involved in oxygen transport from the lung to the various peripheral tissues. Its function is as follows. Hemopressin acts as an antagonist peptide of the cannabinoid receptor CNR1. Hemopressin-binding efficiently blocks cannabinoid receptor CNR1 and subsequent signaling. The chain is Hemoglobin subunit alpha (HBA) from Notamacropus eugenii (Tammar wallaby).